Reading from the N-terminus, the 71-residue chain is Sec-independent protein translocase protein TatA (71 aa).

Residues 1–21 form a helical membrane-spanning segment; sequence MGSFSIWHWLIVLVIVALIFG. The disordered stretch occupies residues 48 to 71; the sequence is ADKTEQVTQQQTTIDVQAKEKQNS.

Belongs to the TatA/E family. In terms of assembly, the Tat system comprises two distinct complexes: a TatABC complex, containing multiple copies of TatA, TatB and TatC subunits, and a separate TatA complex, containing only TatA subunits. Substrates initially bind to the TatABC complex, which probably triggers association of the separate TatA complex to form the active translocon.

It is found in the cell inner membrane. Its function is as follows. Part of the twin-arginine translocation (Tat) system that transports large folded proteins containing a characteristic twin-arginine motif in their signal peptide across membranes. TatA could form the protein-conducting channel of the Tat system. This chain is Sec-independent protein translocase protein TatA, found in Bordetella avium (strain 197N).